A 562-amino-acid polypeptide reads, in one-letter code: NAD-dependent malic enzyme (562 aa).

The active-site Proton donor is the tyrosine 101. Arginine 154 is a binding site for NAD(+). Residue lysine 172 is the Proton acceptor of the active site. The a divalent metal cation site is built by glutamate 243, aspartate 244, and aspartate 267. NAD(+)-binding residues include aspartate 267 and asparagine 415.

This sequence belongs to the malic enzymes family. As to quaternary structure, homotetramer. Mg(2+) is required as a cofactor. Mn(2+) serves as cofactor.

It catalyses the reaction (S)-malate + NAD(+) = pyruvate + CO2 + NADH. The enzyme catalyses oxaloacetate + H(+) = pyruvate + CO2. This chain is NAD-dependent malic enzyme, found in Colwellia psychrerythraea (strain 34H / ATCC BAA-681) (Vibrio psychroerythus).